A 619-amino-acid polypeptide reads, in one-letter code: TBC domain-containing protein C1952.17c (619 aa).

In terms of domain architecture, Rab-GAP TBC spans 34–387 (PDEYSLRAKA…RLWDSIIADQ (354 aa)).

The protein resides in the cytoplasm. In terms of biological role, may act as a GTPase-activating protein for Rab family protein(s). This chain is TBC domain-containing protein C1952.17c, found in Schizosaccharomyces pombe (strain 972 / ATCC 24843) (Fission yeast).